The sequence spans 492 residues: Trypanothione reductase (492 aa).

FAD is bound at residue 35–52; sequence DVQTVHGPPFFAALGGTC. Cys52 and Cys57 are oxidised to a cystine. The active-site Proton acceptor is the His461.

Belongs to the class-I pyridine nucleotide-disulfide oxidoreductase family. Homodimer. FAD serves as cofactor.

It is found in the cytoplasm. The catalysed reaction is trypanothione + NADP(+) = trypanothione disulfide + NADPH + H(+). Its function is as follows. Trypanothione is the parasite analog of glutathione; this enzyme is the equivalent of glutathione reductase. The sequence is that of Trypanothione reductase (TPR) from Trypanosoma congolense.